Reading from the N-terminus, the 286-residue chain is Nucleotide-binding protein Sfum_2066 (286 aa).

8-15 (GLSGSGKS) contributes to the ATP binding site. 59 to 62 (DIRE) is a binding site for GTP.

This sequence belongs to the RapZ-like family.

In terms of biological role, displays ATPase and GTPase activities. The sequence is that of Nucleotide-binding protein Sfum_2066 from Syntrophobacter fumaroxidans (strain DSM 10017 / MPOB).